The primary structure comprises 432 residues: Adenylosuccinate synthetase (432 aa).

Residues glycine 13–lysine 19 and glycine 41–threonine 43 each bind GTP. The active-site Proton acceptor is the aspartate 14. Residues aspartate 14 and glycine 41 each coordinate Mg(2+). IMP-binding positions include aspartate 14–lysine 17, asparagine 39–histidine 42, threonine 130, arginine 144, glutamine 225, threonine 240, and arginine 304. The active-site Proton donor is the histidine 42. Residue alanine 300 to arginine 306 participates in substrate binding. GTP-binding positions include arginine 306, lysine 332 to aspartate 334, and serine 415 to glycine 417.

It belongs to the adenylosuccinate synthetase family. In terms of assembly, homodimer. Requires Mg(2+) as cofactor.

It localises to the cytoplasm. The enzyme catalyses IMP + L-aspartate + GTP = N(6)-(1,2-dicarboxyethyl)-AMP + GDP + phosphate + 2 H(+). Its pathway is purine metabolism; AMP biosynthesis via de novo pathway; AMP from IMP: step 1/2. In terms of biological role, plays an important role in the de novo pathway of purine nucleotide biosynthesis. Catalyzes the first committed step in the biosynthesis of AMP from IMP. The protein is Adenylosuccinate synthetase of Citrobacter koseri (strain ATCC BAA-895 / CDC 4225-83 / SGSC4696).